Here is a 298-residue protein sequence, read N- to C-terminus: tRNA-cytidine(32) 2-sulfurtransferase (298 aa).

The short motif at 48-53 (SGGKDS) is the PP-loop motif element. C123, C126, and C214 together coordinate [4Fe-4S] cluster.

Belongs to the TtcA family. As to quaternary structure, homodimer. The cofactor is Mg(2+). [4Fe-4S] cluster is required as a cofactor.

The protein localises to the cytoplasm. The catalysed reaction is cytidine(32) in tRNA + S-sulfanyl-L-cysteinyl-[cysteine desulfurase] + AH2 + ATP = 2-thiocytidine(32) in tRNA + L-cysteinyl-[cysteine desulfurase] + A + AMP + diphosphate + H(+). It functions in the pathway tRNA modification. Its function is as follows. Catalyzes the ATP-dependent 2-thiolation of cytidine in position 32 of tRNA, to form 2-thiocytidine (s(2)C32). The sulfur atoms are provided by the cysteine/cysteine desulfurase (IscS) system. The sequence is that of tRNA-cytidine(32) 2-sulfurtransferase from Nitrosospira multiformis (strain ATCC 25196 / NCIMB 11849 / C 71).